Consider the following 238-residue polypeptide: Probable RNA/DNA demethylase ALKBH6 (238 aa).

One can recognise a Fe2OG dioxygenase domain in the interval 96-227; sequence PANHVLVNQY…RVSLTIRRVP (132 aa). 2-oxoglutarate is bound by residues asparagine 103 and tyrosine 105. Histidine 114 and aspartate 116 together coordinate Fe cation. The segment at 138–161 is disordered; sequence YEPRRPEDDDPTEQPRPPPRPTTS. Histidine 182 contacts Fe cation. Residues arginine 218 and serine 220 each coordinate 2-oxoglutarate.

The protein belongs to the alkB family. As to quaternary structure, interacts with VCPKMT. The cofactor is Fe(2+). In terms of tissue distribution, widely expressed, with highest expression in testis and pancreas.

It localises to the cytoplasm. It is found in the nucleus. Probable Fe(2+)/2-oxoglutarate-dependent dioxygenase involved in oxidative demethylation of nucleic acids. Binds nucleic acids with a preference for ssDNA or ssRNA to other types of DNAs. May play a role in nucleic acid damage repair. In Homo sapiens (Human), this protein is Probable RNA/DNA demethylase ALKBH6.